Reading from the N-terminus, the 97-residue chain is DNA-binding protein NEQ150 (97 aa).

The protein belongs to the PDCD5 family.

This is DNA-binding protein NEQ150 from Nanoarchaeum equitans (strain Kin4-M).